A 745-amino-acid chain; its full sequence is Junction plakoglobin (745 aa).

Met-1 bears the N-acetylmethionine mark. Thr-14 carries O-linked (GlcNAc) threonine glycosylation. Residues Ser-99 and Ser-125 each carry the phosphoserine modification. ARM repeat units follow at residues 132 to 171, 172 to 215, 216 to 255, 258 to 297, 298 to 341, 342 to 381, 383 to 420, 423 to 464, 470 to 510, 512 to 551, 574 to 613, and 615 to 661; these read NYQD…QLSK, KEAS…LSHH, REGL…NLLL, EGAK…LLAY, GNQE…LSVC, PSNK…NLSD, ATKQ…NLTC, SKNK…HLTS, EMAQ…NLAL, PANH…QPYT, PMNR…ELAQ, and KEAA…PDYR. Positions 132–297 are interaction with DSC1 and DSG1; that stretch reads NYQDDAELAT…TTDCLQLLAY (166 aa). Ser-182 is modified (phosphoserine). Residues 574 to 661 are interaction with DSC1; the sequence is PMNRMEIFRL…ISEDKNPDYR (88 aa). Residues Ser-665 and Ser-730 each carry the phosphoserine modification.

It belongs to the beta-catenin family. As to quaternary structure, homodimer. Component of an E-cadherin/catenin adhesion complex composed of at least E-cadherin/CDH1 and gamma-catenin/JUP, and possibly alpha-catenin/CTNNA1; the complex is located to adherens junctions. The stable association of CTNNA1 is controversial as CTNNA1 was shown not to bind to F-actin when assembled in the complex. Interacts with MUC1. Interacts with CAV1. Interacts with PTPRJ. Interacts with DSG1. Interacts with DSC1 and DSC2. Interacts with PKP2. Interacts with PKP3 (via N-terminus); the interaction is required for PKP3 localization to desmosome cell-cell junctions. Interacts with DSG4. Post-translationally, may be phosphorylated by FER. Expressed in the heart (at protein level).

It is found in the cell junction. Its subcellular location is the adherens junction. It localises to the desmosome. The protein resides in the cytoplasm. The protein localises to the cytoskeleton. It is found in the cell membrane. Its subcellular location is the nucleus. Its function is as follows. Common junctional plaque protein. The membrane-associated plaques are architectural elements in an important strategic position to influence the arrangement and function of both the cytoskeleton and the cells within the tissue. The presence of plakoglobin in both the desmosomes and in the intermediate junctions suggests that it plays a central role in the structure and function of submembranous plaques. Acts as a substrate for VE-PTP and is required by it to stimulate VE-cadherin function in endothelial cells. Can replace beta-catenin in E-cadherin/catenin adhesion complexes which are proposed to couple cadherins to the actin cytoskeleton. The chain is Junction plakoglobin from Homo sapiens (Human).